The following is a 106-amino-acid chain: Large ribosomal subunit protein uL24 (106 aa).

It belongs to the universal ribosomal protein uL24 family. Part of the 50S ribosomal subunit.

In terms of biological role, one of two assembly initiator proteins, it binds directly to the 5'-end of the 23S rRNA, where it nucleates assembly of the 50S subunit. Functionally, one of the proteins that surrounds the polypeptide exit tunnel on the outside of the subunit. The protein is Large ribosomal subunit protein uL24 of Paramagnetospirillum magneticum (strain ATCC 700264 / AMB-1) (Magnetospirillum magneticum).